A 108-amino-acid chain; its full sequence is MKEVTKMLYCALLVTKVIYQMKGKSQPKRERKKQNYWVLKSLWKRPQRQAIMSKLYSKRLPNRCLNFKTASQLLWIAKMQIVQTKINRESLIFLQQRSRNKALVSVST.

This is an uncharacterized protein from Saccharomyces cerevisiae (strain ATCC 204508 / S288c) (Baker's yeast).